Here is a 393-residue protein sequence, read N- to C-terminus: Methylthioribose kinase (393 aa).

ATP-binding positions include Asn-38, Lys-53, and 107 to 109 (EDL). Residue Asp-225 participates in substrate binding. Residue 242–244 (DPE) coordinates ATP. Residue Arg-332 coordinates substrate.

Belongs to the methylthioribose kinase family. In terms of assembly, homodimer.

It carries out the reaction 5-(methylsulfanyl)-D-ribose + ATP = 5-(methylsulfanyl)-alpha-D-ribose 1-phosphate + ADP + H(+). It participates in amino-acid biosynthesis; L-methionine biosynthesis via salvage pathway; S-methyl-5-thio-alpha-D-ribose 1-phosphate from S-methyl-5'-thioadenosine (hydrolase route): step 2/2. Catalyzes the phosphorylation of methylthioribose into methylthioribose-1-phosphate. This chain is Methylthioribose kinase, found in Bacillus anthracis (strain A0248).